Reading from the N-terminus, the 507-residue chain is ATP synthase subunit beta (507 aa).

A disordered region spans residues 1-22; that stretch reads MSSLANKAKSKGKSSKSKSNVN. 183-190 is an ATP binding site; that stretch reads GGAGVGKT.

It belongs to the ATPase alpha/beta chains family. As to quaternary structure, F-type ATPases have 2 components, CF(1) - the catalytic core - and CF(0) - the membrane proton channel. CF(1) has five subunits: alpha(3), beta(3), gamma(1), delta(1), epsilon(1). CF(0) has three main subunits: a(1), b(2) and c(9-12). The alpha and beta chains form an alternating ring which encloses part of the gamma chain. CF(1) is attached to CF(0) by a central stalk formed by the gamma and epsilon chains, while a peripheral stalk is formed by the delta and b chains.

The protein localises to the cell inner membrane. It catalyses the reaction ATP + H2O + 4 H(+)(in) = ADP + phosphate + 5 H(+)(out). In terms of biological role, produces ATP from ADP in the presence of a proton gradient across the membrane. The catalytic sites are hosted primarily by the beta subunits. In Ehrlichia canis (strain Jake), this protein is ATP synthase subunit beta.